A 172-amino-acid chain; its full sequence is ATP synthase subunit b (172 aa).

Residues 18 to 38 form a helical membrane-spanning segment; sequence IVWSLIILVIVAVFFYKFFMP.

It belongs to the ATPase B chain family. As to quaternary structure, F-type ATPases have 2 components, F(1) - the catalytic core - and F(0) - the membrane proton channel. F(1) has five subunits: alpha(3), beta(3), gamma(1), delta(1), epsilon(1). F(0) has three main subunits: a(1), b(2) and c(10-14). The alpha and beta chains form an alternating ring which encloses part of the gamma chain. F(1) is attached to F(0) by a central stalk formed by the gamma and epsilon chains, while a peripheral stalk is formed by the delta and b chains.

It localises to the cell membrane. Functionally, f(1)F(0) ATP synthase produces ATP from ADP in the presence of a proton or sodium gradient. F-type ATPases consist of two structural domains, F(1) containing the extramembraneous catalytic core and F(0) containing the membrane proton channel, linked together by a central stalk and a peripheral stalk. During catalysis, ATP synthesis in the catalytic domain of F(1) is coupled via a rotary mechanism of the central stalk subunits to proton translocation. Its function is as follows. Component of the F(0) channel, it forms part of the peripheral stalk, linking F(1) to F(0). The chain is ATP synthase subunit b from Bifidobacterium longum (strain DJO10A).